The chain runs to 94 residues: DNA-directed RNA polymerase subunit omega (94 aa).

The protein belongs to the RNA polymerase subunit omega family. As to quaternary structure, the RNAP catalytic core consists of 2 alpha, 1 beta, 1 beta' and 1 omega subunit. When a sigma factor is associated with the core the holoenzyme is formed, which can initiate transcription.

It carries out the reaction RNA(n) + a ribonucleoside 5'-triphosphate = RNA(n+1) + diphosphate. Promotes RNA polymerase assembly. Latches the N- and C-terminal regions of the beta' subunit thereby facilitating its interaction with the beta and alpha subunits. This Bifidobacterium longum subsp. infantis (strain ATCC 15697 / DSM 20088 / JCM 1222 / NCTC 11817 / S12) protein is DNA-directed RNA polymerase subunit omega.